The chain runs to 25 residues: Small ribosomal subunit protein eS32 (25 aa).

Positions 1–25 (MRDKWRKKRVRRLKRKRRKVRARSK) are disordered.

Belongs to the eukaryotic ribosomal protein eS32 family. In terms of assembly, component of the small ribosomal subunit. Mature ribosomes consist of a small (40S) and a large (60S) subunit. The 40S subunit contains about 32 different proteins and 1 molecule of RNA (18S). The 60S subunit contains 45 different proteins and 3 molecules of RNA (25S, 5.8S and 5S).

Its subcellular location is the cytoplasm. Functionally, component of the ribosome, a large ribonucleoprotein complex responsible for the synthesis of proteins in the cell. The small ribosomal subunit (SSU) binds messenger RNAs (mRNAs) and translates the encoded message by selecting cognate aminoacyl-transfer RNA (tRNA) molecules. The large subunit (LSU) contains the ribosomal catalytic site termed the peptidyl transferase center (PTC), which catalyzes the formation of peptide bonds, thereby polymerizing the amino acids delivered by tRNAs into a polypeptide chain. The nascent polypeptides leave the ribosome through a tunnel in the LSU and interact with protein factors that function in enzymatic processing, targeting, and the membrane insertion of nascent chains at the exit of the ribosomal tunnel. The polypeptide is Small ribosomal subunit protein eS32 (Candida albicans (strain SC5314 / ATCC MYA-2876) (Yeast)).